The sequence spans 492 residues: Protein nucleotidyltransferase YdiU (492 aa).

Positions 94, 96, 97, 117, 129, 130, 180, and 187 each coordinate ATP. Asp257 functions as the Proton acceptor in the catalytic mechanism. Mg(2+) contacts are provided by Asn258 and Asp267. Asp267 is a binding site for ATP.

This sequence belongs to the SELO family. Mg(2+) serves as cofactor. Requires Mn(2+) as cofactor.

It carries out the reaction L-seryl-[protein] + ATP = 3-O-(5'-adenylyl)-L-seryl-[protein] + diphosphate. The catalysed reaction is L-threonyl-[protein] + ATP = 3-O-(5'-adenylyl)-L-threonyl-[protein] + diphosphate. It catalyses the reaction L-tyrosyl-[protein] + ATP = O-(5'-adenylyl)-L-tyrosyl-[protein] + diphosphate. The enzyme catalyses L-histidyl-[protein] + UTP = N(tele)-(5'-uridylyl)-L-histidyl-[protein] + diphosphate. It carries out the reaction L-seryl-[protein] + UTP = O-(5'-uridylyl)-L-seryl-[protein] + diphosphate. The catalysed reaction is L-tyrosyl-[protein] + UTP = O-(5'-uridylyl)-L-tyrosyl-[protein] + diphosphate. Nucleotidyltransferase involved in the post-translational modification of proteins. It can catalyze the addition of adenosine monophosphate (AMP) or uridine monophosphate (UMP) to a protein, resulting in modifications known as AMPylation and UMPylation. The sequence is that of Protein nucleotidyltransferase YdiU from Halalkalibacterium halodurans (strain ATCC BAA-125 / DSM 18197 / FERM 7344 / JCM 9153 / C-125) (Bacillus halodurans).